We begin with the raw amino-acid sequence, 1110 residues long: Ribosome assembly protein 1 (1110 aa).

A tr-type G domain is found at 17–262; it reads SCIRNICIVA…QKLGAKRENL (246 aa). GTP-binding positions include 26 to 33, 102 to 106, and 156 to 159; these read AHVDHGKT, DSPGH, and NKID. Residue Ser431 is modified to Phosphoserine.

The protein belongs to the TRAFAC class translation factor GTPase superfamily. Classic translation factor GTPase family.

The protein resides in the cytoplasm. It catalyses the reaction GTP + H2O = GDP + phosphate + H(+). With respect to regulation, GTPase activity is stimulated in the presence of 60S subunits. Functionally, GTPase involved in the biogenesis of the 60S ribosomal subunit and translational activation of ribosomes. Together with SDO1, may trigger the GTP-dependent release of TIF6 from 60S pre-ribosomes in the cytoplasm, thereby activating ribosomes for translation competence by allowing 80S ribosome assembly and facilitating TIF6 recycling to the nucleus, where it is required for 60S rRNA processing and nuclear export. Inhibits GTPase activity of ribosome-bound EF-2. The sequence is that of Ribosome assembly protein 1 (RIA1) from Saccharomyces cerevisiae (strain ATCC 204508 / S288c) (Baker's yeast).